A 166-amino-acid chain; its full sequence is Large ribosomal subunit protein uL10 (166 aa).

It belongs to the universal ribosomal protein uL10 family. In terms of assembly, part of the ribosomal stalk of the 50S ribosomal subunit. The N-terminus interacts with L11 and the large rRNA to form the base of the stalk. The C-terminus forms an elongated spine to which L12 dimers bind in a sequential fashion forming a multimeric L10(L12)X complex.

Its function is as follows. Forms part of the ribosomal stalk, playing a central role in the interaction of the ribosome with GTP-bound translation factors. The polypeptide is Large ribosomal subunit protein uL10 (Alkaliphilus metalliredigens (strain QYMF)).